Reading from the N-terminus, the 1453-residue chain is Scavenger receptor cysteine-rich type 1 protein M160 (1453 aa).

A signal peptide spans 1–40 (MMLPQNSWHIDFGRCCCHQNLFSAVVTCILLLNSCFLISS). Residues 41–1359 (FNGTDLELRL…LKSLNASSGH (1319 aa)) are Extracellular-facing. N-linked (GlcNAc...) asparagine glycans are attached at residues N42, N78, N120, and N161. 9 SRCR domains span residues 48–148 (LRLV…VNCY), 155–255 (LRLV…LTCY), 262–362 (LRLV…VICS), 369–469 (LRLA…VICS), 476–576 (LRLV…VTCS), 583–683 (LRLV…VICS), 690–790 (LRLV…LICS), 795–895 (PRLV…VVCS), and 900–1000 (VRLV…VICT). Cystine bridges form between C73–C137, C86–C147, and C117–C127. 6 disulfides stabilise this stretch: C180–C244, C193–C254, C224–C234, C287–C351, C300–C361, and C331–C341. N334, N377, N441, N548, and N637 each carry an N-linked (GlcNAc...) asparagine glycan. 18 cysteine pairs are disulfide-bonded: C394–C458, C407–C468, C438–C448, C501–C565, C514–C575, C545–C555, C608–C672, C621–C682, C652–C662, C715–C779, C728–C789, C759–C769, C820–C884, C833–C894, C864–C874, C925–C989, C938–C999, and C969–C979. N-linked (GlcNAc...) asparagine glycans are attached at residues N972, N1013, N1084, and N1104. 3 consecutive SRCR domains span residues 1036 to 1136 (LRLV…VICS), 1141 to 1243 (LRLY…ITCE), and 1246 to 1346 (IRVR…VRCS). 3 cysteine pairs are disulfide-bonded: C1061-C1125, C1074-C1135, and C1105-C1115. Residues N1161 and N1171 are each glycosylated (N-linked (GlcNAc...) asparagine). Disulfide bonds link C1181/C1242, C1212/C1222, C1271/C1335, C1284/C1345, and C1315/C1325. N1318 and N1354 each carry an N-linked (GlcNAc...) asparagine glycan. A helical membrane pass occupies residues 1360–1380 (LALILSSIFGLLLLVLFILFL). The Cytoplasmic segment spans residues 1381–1453 (TWCRVQKQKH…GVLPASEATK (73 aa)). Basic and acidic residues predominate over residues 1418–1435 (EDPHGTRTSDDTPNHGCE). The tract at residues 1418-1453 (EDPHGTRTSDDTPNHGCEDASDTSLLGVLPASEATK) is disordered.

In terms of tissue distribution, isoform 1 is highly expressed in the spleen, lymph nodes, thymus, and fetal liver and weakly expressed in bone marrow and no expression was found in peripheral blood leukocytes. Isoform 1 expression is restricted to the monocyte and macrophage cell lines. Isoform 2 is only expressed in spleen.

It is found in the cell membrane. The protein resides in the secreted. The chain is Scavenger receptor cysteine-rich type 1 protein M160 (CD163L1) from Homo sapiens (Human).